A 93-amino-acid polypeptide reads, in one-letter code: Small ribosomal subunit protein uS19 (93 aa).

Belongs to the universal ribosomal protein uS19 family.

Protein S19 forms a complex with S13 that binds strongly to the 16S ribosomal RNA. The protein is Small ribosomal subunit protein uS19 of Arthrobacter sp. (strain FB24).